A 72-amino-acid polypeptide reads, in one-letter code: MASGRCCTFLEILLAIILPPLGVFLRFGCCSMEFCICLLLTILGYVPGIIYAVYVLVALDSDQYQREYHTLA.

Transmembrane regions (helical) follow at residues 9–29 and 39–59; these read FLEILLAIILPPLGVFLRFGC and LLTILGYVPGIIYAVYVLVAL.

Belongs to the UPF0057 (PMP3) family.

The protein localises to the membrane. The protein is Hydrophobic protein OSR8 (OSR8) of Oryza sativa subsp. japonica (Rice).